A 1169-amino-acid chain; its full sequence is Translation initiation factor IF-2 (1169 aa).

Disordered stretches follow at residues 69–108 (IKAK…PLLI) and 139–568 (ALSK…LRAA). Composition is skewed to basic and acidic residues over residues 71 to 83 (AKNE…DNKN) and 92 to 102 (HPEKLSKEGLN). A compositionally biased stretch (polar residues) spans 139–156 (ALSKNQNKTNTSVITTPN). Positions 157-171 (LKDKKNPSALQDKKP) are enriched in basic and acidic residues. A compositionally biased stretch (low complexity) spans 196 to 214 (NLANSNRNINANKINNSVN). Over residues 231–248 (ADNNNFPKKNLNSPNVKS) the composition is skewed to polar residues. A compositionally biased stretch (low complexity) spans 265–281 (NTNRPNSNSRQPSSNTQ). Composition is skewed to polar residues over residues 282-294 (ISAN…NRQG), 412-432 (MQLQ…NVNK), and 439-455 (NQKT…SPSP). Residues 472-486 (GRTDWDDSAKLEALR) are compositionally biased toward basic and acidic residues. The span at 544–560 (KQFKKKKKETTRQRQKR) shows a compositional bias: basic residues. The 178-residue stretch at 661–838 (KRPPVITVMG…EVEDLQANPE (178 aa)) folds into the tr-type G domain. Residues 670–677 (GHVDHGKT) are G1. A GTP-binding site is contributed by 670-677 (GHVDHGKT). Residues 695-699 (GITQH) form a G2 region. The interval 720 to 723 (DTPG) is G3. Residues 720–724 (DTPGH) and 774–777 (NKID) contribute to the GTP site. The interval 774–777 (NKID) is G4. The interval 810 to 812 (SAI) is G5.

The protein belongs to the TRAFAC class translation factor GTPase superfamily. Classic translation factor GTPase family. IF-2 subfamily.

It localises to the cytoplasm. One of the essential components for the initiation of protein synthesis. Protects formylmethionyl-tRNA from spontaneous hydrolysis and promotes its binding to the 30S ribosomal subunits. Also involved in the hydrolysis of GTP during the formation of the 70S ribosomal complex. The polypeptide is Translation initiation factor IF-2 (Prochlorococcus marinus subsp. pastoris (strain CCMP1986 / NIES-2087 / MED4)).